A 183-amino-acid polypeptide reads, in one-letter code: Inosine triphosphate pyrophosphatase (183 aa).

8–13 is an ITP binding site; the sequence is TGNKNK. Glu-36 serves as a coordination point for Mg(2+). ITP-binding positions include Lys-48, 64–65, Lys-81, 140–143, Lys-161, and 166–167; these read DT, FGWD, and HR.

It belongs to the HAM1 NTPase family. Homodimer. Mg(2+) serves as cofactor. Requires Mn(2+) as cofactor.

It localises to the cytoplasm. The protein localises to the nucleus. The enzyme catalyses ITP + H2O = IMP + diphosphate + H(+). It carries out the reaction dITP + H2O = dIMP + diphosphate + H(+). The catalysed reaction is XTP + H2O = XMP + diphosphate + H(+). In terms of biological role, pyrophosphatase that hydrolyzes non-canonical purine nucleotides such as inosine triphosphate (ITP), deoxyinosine triphosphate (dITP) or xanthosine 5'-triphosphate (XTP) to their respective monophosphate derivatives. The enzyme does not distinguish between the deoxy- and ribose forms. Probably excludes non-canonical purines from RNA and DNA precursor pools, thus preventing their incorporation into RNA and DNA and avoiding chromosomal lesions. This chain is Inosine triphosphate pyrophosphatase, found in Ajellomyces capsulatus (strain G186AR / H82 / ATCC MYA-2454 / RMSCC 2432) (Darling's disease fungus).